Consider the following 429-residue polypeptide: Nucleotide exchange factor Sil1 (429 aa).

A signal peptide spans methionine 1–alanine 24. Asparagine 29 carries N-linked (GlcNAc...) asparagine glycosylation. Residues aspartate 70–alanine 98 are disordered. Residues glycine 75–aspartate 84 show a composition bias toward polar residues. Over residues glutamine 85 to asparagine 94 the composition is skewed to basic and acidic residues. The stretch at aspartate 104 to arginine 135 forms a coiled coil. 3 N-linked (GlcNAc...) asparagine glycosylation sites follow: asparagine 150, asparagine 199, and asparagine 400. Positions histidine 426–leucine 429 match the Prevents secretion from ER motif.

The protein belongs to the SIL1 family.

The protein resides in the endoplasmic reticulum lumen. Required for protein translocation and folding in the endoplasmic reticulum (ER). Functions as a nucleotide exchange factor for an ER lumenal chaperone of HSP70 family. This is Nucleotide exchange factor Sil1 from Drosophila melanogaster (Fruit fly).